A 367-amino-acid chain; its full sequence is DNA replication and repair protein RecF (367 aa).

Residue 30 to 37 (GANGSGKT) coordinates ATP.

The protein belongs to the RecF family.

It is found in the cytoplasm. The RecF protein is involved in DNA metabolism; it is required for DNA replication and normal SOS inducibility. RecF binds preferentially to single-stranded, linear DNA. It also seems to bind ATP. The polypeptide is DNA replication and repair protein RecF (Pseudomonas syringae pv. tomato (strain ATCC BAA-871 / DC3000)).